The following is a 317-amino-acid chain: Pseudouridine-5'-phosphate glycosidase 1 (317 aa).

The Proton donor role is filled by glutamate 40. Lysine 101 and valine 121 together coordinate substrate. Residue aspartate 153 coordinates Mn(2+). 155–157 (SAD) contributes to the substrate binding site. The active-site Nucleophile is lysine 174.

It belongs to the pseudouridine-5'-phosphate glycosidase family. Homotrimer. Mn(2+) is required as a cofactor.

It catalyses the reaction D-ribose 5-phosphate + uracil = psi-UMP + H2O. In terms of biological role, catalyzes the reversible cleavage of pseudouridine 5'-phosphate (PsiMP) to ribose 5-phosphate and uracil. Functions biologically in the cleavage direction, as part of a pseudouridine degradation pathway. This is Pseudouridine-5'-phosphate glycosidase 1 from Rhizobium johnstonii (strain DSM 114642 / LMG 32736 / 3841) (Rhizobium leguminosarum bv. viciae).